The primary structure comprises 266 residues: Glutamate racemase (266 aa).

Substrate-binding positions include Asp-9–Ser-10 and Tyr-41–Gly-42. The active-site Proton donor/acceptor is the Cys-72. Residue Asn-73 to Thr-74 participates in substrate binding. Cys-184 (proton donor/acceptor) is an active-site residue. Position 185–186 (Thr-185–His-186) interacts with substrate.

This sequence belongs to the aspartate/glutamate racemases family.

It catalyses the reaction L-glutamate = D-glutamate. It functions in the pathway cell wall biogenesis; peptidoglycan biosynthesis. In terms of biological role, provides the (R)-glutamate required for cell wall biosynthesis. The polypeptide is Glutamate racemase (Staphylococcus haemolyticus (strain JCSC1435)).